A 395-amino-acid chain; its full sequence is Ribosomal RNA large subunit methyltransferase I (395 aa).

Residues 2–79 (SSRVTLHPGR…QNESVDNGFF (78 aa)) enclose the PUA domain.

The protein belongs to the methyltransferase superfamily. RlmI family.

The protein resides in the cytoplasm. It catalyses the reaction cytidine(1962) in 23S rRNA + S-adenosyl-L-methionine = 5-methylcytidine(1962) in 23S rRNA + S-adenosyl-L-homocysteine + H(+). In terms of biological role, specifically methylates the cytosine at position 1962 (m5C1962) of 23S rRNA. The sequence is that of Ribosomal RNA large subunit methyltransferase I from Pseudoalteromonas atlantica (strain T6c / ATCC BAA-1087).